Consider the following 421-residue polypeptide: Trimethyllysine dioxygenase, mitochondrial (421 aa).

The transit peptide at 1–15 (MWYHKLLHQQSRLRN) directs the protein to the mitochondrion. Residues K179 and K236 each carry the N6-acetyllysine modification. Fe cation-binding residues include H242, D244, and H389.

The protein belongs to the gamma-BBH/TMLD family. In terms of assembly, homodimer. Requires Fe(2+) as cofactor. L-ascorbate serves as cofactor.

It is found in the mitochondrion matrix. It catalyses the reaction N(6),N(6),N(6)-trimethyl-L-lysine + 2-oxoglutarate + O2 = (3S)-3-hydroxy-N(6),N(6),N(6)-trimethyl-L-lysine + succinate + CO2. It functions in the pathway amine and polyamine biosynthesis; carnitine biosynthesis. In terms of biological role, converts trimethyllysine (TML) into hydroxytrimethyllysine (HTML). This is Trimethyllysine dioxygenase, mitochondrial (Tmlhe) from Mus musculus (Mouse).